The chain runs to 1207 residues: DNA-directed RNA polymerase subunit beta (1207 aa).

This sequence belongs to the RNA polymerase beta chain family. The RNAP catalytic core consists of 2 alpha, 1 beta, 1 beta' and 1 omega subunit. When a sigma factor is associated with the core the holoenzyme is formed, which can initiate transcription.

The catalysed reaction is RNA(n) + a ribonucleoside 5'-triphosphate = RNA(n+1) + diphosphate. Functionally, DNA-dependent RNA polymerase catalyzes the transcription of DNA into RNA using the four ribonucleoside triphosphates as substrates. The chain is DNA-directed RNA polymerase subunit beta from Enterococcus faecalis (strain ATCC 700802 / V583).